A 100-amino-acid chain; its full sequence is Large ribosomal subunit protein uL23 (100 aa).

This sequence belongs to the universal ribosomal protein uL23 family. As to quaternary structure, part of the 50S ribosomal subunit. Contacts protein L29, and trigger factor when it is bound to the ribosome.

In terms of biological role, one of the early assembly proteins it binds 23S rRNA. One of the proteins that surrounds the polypeptide exit tunnel on the outside of the ribosome. Forms the main docking site for trigger factor binding to the ribosome. In Shigella dysenteriae serotype 1 (strain Sd197), this protein is Large ribosomal subunit protein uL23.